The following is a 1015-amino-acid chain: PHD finger protein 20-like protein 1 (1015 aa).

The Tudor 1 domain occupies 11-71 (ITFEIGARLE…SNRLRPLERP (61 aa)). Glycyl lysine isopeptide (Lys-Gly) (interchain with G-Cter in SUMO2) cross-links involve residues lysine 75 and lysine 79. The Tudor 2 domain occupies 85–141 (FDFKAGEEVLARWTDCRYYPAKIEAINKEGTFTVQFYDGVIRCLKRMHIKAMPEDAK). Disordered regions lie at residues 183-206 (AKNK…RDGG) and 309-367 (EQAI…KAPK). Composition is skewed to polar residues over residues 186 to 197 (KTGSKPRTSANS) and 315 to 346 (KPQS…SSGK). Serine 368 is subject to Phosphoserine. Disordered stretches follow at residues 389-455 (VINK…SSVP) and 478-513 (CGSE…NPTS). Residues 404 to 415 (PCKHSERRRRSQ) show a composition bias toward basic residues. Serine 432 bears the Phosphoserine mark. Composition is skewed to polar residues over residues 443–453 (SISSQNQQESS) and 480–489 (SEVTGSQAPD). Residue lysine 530 forms a Glycyl lysine isopeptide (Lys-Gly) (interchain with G-Cter in SUMO2) linkage. Basic and acidic residues predominate over residues 539–565 (EKTSTAFGKRKEKDKERKEKRDKDHYK). The disordered stretch occupies residues 539–585 (EKTSTAFGKRKEKDKERKEKRDKDHYKPKQKKKKKKKKKSKQHDYSD). A compositionally biased stretch (basic residues) spans 566-579 (PKQKKKKKKKKKSK). The PHD-type zinc-finger motif lies at 681–729 (IVRCICELDEENGFMIQCEECLCWQHSVCMGLLEDSIPEQYICYICRDP). Lysine 849 participates in a covalent cross-link: Glycyl lysine isopeptide (Lys-Gly) (interchain with G-Cter in SUMO2). Over residues 859–878 (HSYQKPQSFSQDCHSLTDPG) the composition is skewed to polar residues. Residues 859–889 (HSYQKPQSFSQDCHSLTDPGSSDDDDVSSFE) form a disordered region. Residues 879–889 (SSDDDDVSSFE) are compositionally biased toward acidic residues. Position 907 is an N6-acetyllysine (lysine 907).

Interacts with methylated DNMT1 (DNMT1K142me1). Interacts with SOX2.

Its subcellular location is the nucleus. Is a negative regulator of proteasomal degradation of a set of methylated proteins, including DNMT1 and SOX2. Involved in the maintainance of embryonic stem cells pluripotency, through the regulation of SOX2 levels. The chain is PHD finger protein 20-like protein 1 (Phf20l1) from Rattus norvegicus (Rat).